Reading from the N-terminus, the 306-residue chain is Pantothenate kinase (306 aa).

90 to 97 (GSVAVGKS) contributes to the ATP binding site.

It belongs to the prokaryotic pantothenate kinase family.

It is found in the cytoplasm. The enzyme catalyses (R)-pantothenate + ATP = (R)-4'-phosphopantothenate + ADP + H(+). It participates in cofactor biosynthesis; coenzyme A biosynthesis; CoA from (R)-pantothenate: step 1/5. In Listeria innocua serovar 6a (strain ATCC BAA-680 / CLIP 11262), this protein is Pantothenate kinase (coaA).